The following is a 96-amino-acid chain: ATP synthase subunit c (96 aa).

Helical transmembrane passes span 9 to 29 (FIAC…GCGI) and 58 to 78 (IGLA…LILI).

Belongs to the ATPase C chain family. F-type ATPases have 2 components, F(1) - the catalytic core - and F(0) - the membrane proton channel. F(1) has five subunits: alpha(3), beta(3), gamma(1), delta(1), epsilon(1). F(0) has three main subunits: a(1), b(2) and c(10-14). The alpha and beta chains form an alternating ring which encloses part of the gamma chain. F(1) is attached to F(0) by a central stalk formed by the gamma and epsilon chains, while a peripheral stalk is formed by the delta and b chains.

The protein resides in the cell inner membrane. Functionally, f(1)F(0) ATP synthase produces ATP from ADP in the presence of a proton or sodium gradient. F-type ATPases consist of two structural domains, F(1) containing the extramembraneous catalytic core and F(0) containing the membrane proton channel, linked together by a central stalk and a peripheral stalk. During catalysis, ATP synthesis in the catalytic domain of F(1) is coupled via a rotary mechanism of the central stalk subunits to proton translocation. Its function is as follows. Key component of the F(0) channel; it plays a direct role in translocation across the membrane. A homomeric c-ring of between 10-14 subunits forms the central stalk rotor element with the F(1) delta and epsilon subunits. This is ATP synthase subunit c from Desulfosudis oleivorans (strain DSM 6200 / JCM 39069 / Hxd3) (Desulfococcus oleovorans).